Reading from the N-terminus, the 485-residue chain is Serine/threonine-protein kinase dst4 (485 aa).

The Protein kinase domain occupies 21–278 (FRVLEVIGQG…AVDLLNHPFI (258 aa)). ATP is bound by residues 27 to 35 (IGQGSFGVV) and K50. D142 serves as the catalytic Proton acceptor. Disordered stretches follow at residues 304-343 (RRKK…SAGL), 360-424 (VMRE…GSVV), and 436-485 (SMKL…NQDD). Over residues 310-324 (EEEAEEAEEGDDYDD) the composition is skewed to acidic residues. Low complexity predominate over residues 370-393 (SNNGGTFIYNNNNNNSSKTSSSGT). Acidic residues-rich tracts occupy residues 406–417 (DDDDDDDIEEGG) and 450–468 (SSDE…EEGG). The segment covering 474–485 (VVYTKSPVNQDD) has biased composition (polar residues).

It belongs to the protein kinase superfamily. STE Ser/Thr protein kinase family. STE20 subfamily. It depends on Mg(2+) as a cofactor.

It catalyses the reaction L-seryl-[protein] + ATP = O-phospho-L-seryl-[protein] + ADP + H(+). The catalysed reaction is L-threonyl-[protein] + ATP = O-phospho-L-threonyl-[protein] + ADP + H(+). This chain is Serine/threonine-protein kinase dst4, found in Dictyostelium discoideum (Social amoeba).